Reading from the N-terminus, the 547-residue chain is Cytochrome P450 78A1 (547 aa).

Over residues A84–P94 the composition is skewed to low complexity. The interval A84–R104 is disordered. C490 contacts heme.

The protein belongs to the cytochrome P450 family. The cofactor is heme. In terms of tissue distribution, shoot apex.

This Zea mays (Maize) protein is Cytochrome P450 78A1 (CYP78A1).